The chain runs to 406 residues: Dual-specificity RNA methyltransferase RlmN (406 aa).

Glu119 functions as the Proton acceptor in the catalytic mechanism. The Radical SAM core domain occupies 125–370 (DKGRGTLCVS…AMVRRTRGDD (246 aa)). Cysteines 132 and 375 form a disulfide. [4Fe-4S] cluster is bound by residues Cys139, Cys143, and Cys146. S-adenosyl-L-methionine-binding positions include 192-193 (GE), Ser224, 246-248 (SLH), and Asn332. The active-site S-methylcysteine intermediate is the Cys375.

Belongs to the radical SAM superfamily. RlmN family. Requires [4Fe-4S] cluster as cofactor.

It localises to the cytoplasm. The enzyme catalyses adenosine(2503) in 23S rRNA + 2 reduced [2Fe-2S]-[ferredoxin] + 2 S-adenosyl-L-methionine = 2-methyladenosine(2503) in 23S rRNA + 5'-deoxyadenosine + L-methionine + 2 oxidized [2Fe-2S]-[ferredoxin] + S-adenosyl-L-homocysteine. It carries out the reaction adenosine(37) in tRNA + 2 reduced [2Fe-2S]-[ferredoxin] + 2 S-adenosyl-L-methionine = 2-methyladenosine(37) in tRNA + 5'-deoxyadenosine + L-methionine + 2 oxidized [2Fe-2S]-[ferredoxin] + S-adenosyl-L-homocysteine. In terms of biological role, specifically methylates position 2 of adenine 2503 in 23S rRNA and position 2 of adenine 37 in tRNAs. m2A2503 modification seems to play a crucial role in the proofreading step occurring at the peptidyl transferase center and thus would serve to optimize ribosomal fidelity. This Xylella fastidiosa (strain Temecula1 / ATCC 700964) protein is Dual-specificity RNA methyltransferase RlmN.